The primary structure comprises 104 residues: Large ribosomal subunit protein uL24 (104 aa).

It belongs to the universal ribosomal protein uL24 family. In terms of assembly, part of the 50S ribosomal subunit.

In terms of biological role, one of two assembly initiator proteins, it binds directly to the 5'-end of the 23S rRNA, where it nucleates assembly of the 50S subunit. Its function is as follows. One of the proteins that surrounds the polypeptide exit tunnel on the outside of the subunit. This is Large ribosomal subunit protein uL24 from Bradyrhizobium sp. (strain ORS 278).